The following is a 255-amino-acid chain: Ribonuclease HII (255 aa).

Residues 72-255 (AIICGIDEVG…KSFEPIKSLL (184 aa)) form the RNase H type-2 domain. Positions 78, 79, and 170 each coordinate a divalent metal cation.

The protein belongs to the RNase HII family. Mn(2+) serves as cofactor. Requires Mg(2+) as cofactor.

It is found in the cytoplasm. The catalysed reaction is Endonucleolytic cleavage to 5'-phosphomonoester.. Its function is as follows. Endonuclease that specifically degrades the RNA of RNA-DNA hybrids. The polypeptide is Ribonuclease HII (Staphylococcus aureus (strain MSSA476)).